A 225-amino-acid polypeptide reads, in one-letter code: NAD(P)H-quinone oxidoreductase subunit K, chloroplastic (225 aa).

[4Fe-4S] cluster contacts are provided by cysteine 43, cysteine 44, cysteine 108, and cysteine 139.

The protein belongs to the complex I 20 kDa subunit family. As to quaternary structure, NDH is composed of at least 16 different subunits, 5 of which are encoded in the nucleus. Requires [4Fe-4S] cluster as cofactor.

It is found in the plastid. Its subcellular location is the chloroplast thylakoid membrane. The enzyme catalyses a plastoquinone + NADH + (n+1) H(+)(in) = a plastoquinol + NAD(+) + n H(+)(out). The catalysed reaction is a plastoquinone + NADPH + (n+1) H(+)(in) = a plastoquinol + NADP(+) + n H(+)(out). In terms of biological role, NDH shuttles electrons from NAD(P)H:plastoquinone, via FMN and iron-sulfur (Fe-S) centers, to quinones in the photosynthetic chain and possibly in a chloroplast respiratory chain. The immediate electron acceptor for the enzyme in this species is believed to be plastoquinone. Couples the redox reaction to proton translocation, and thus conserves the redox energy in a proton gradient. The polypeptide is NAD(P)H-quinone oxidoreductase subunit K, chloroplastic (Atropa belladonna (Belladonna)).